Reading from the N-terminus, the 176-residue chain is Calcineurin subunit B type 2 (176 aa).

Gly-2 is lipidated: N-myristoyl glycine. EF-hand domains lie at 18 to 53, 57 to 85, 87 to 122, and 128 to 163; these read DEIKRLGRSFKKMDLDKSGSLSVDEFMSLPELQQNP, RVIDIFDTDGNGEVDFREFIVGTSQFSVK, DEEQKLRFAFRIYDMDNDGFISNGELFQVLKMMVGN, and QLQQLVDKSILVLDKDGDGRISFEEFRDVVRTMEIH. Ca(2+)-binding residues include Asp-31, Asp-33, Ser-35, Ser-37, Glu-42, Asp-63, Asp-65, Asn-67, Glu-69, Glu-74, Asp-100, Asp-102, Asp-104, and Glu-111. The interval 131 to 136 is calcineurin A binding; sequence QLVDKS. Residues Asp-141, Asp-143, Asp-145, Arg-147, and Glu-152 each coordinate Ca(2+).

The protein belongs to the calcineurin regulatory subunit family. In terms of assembly, forms a complex composed of a calmodulin-dependent catalytic subunit (also known as calcineurin A) and a regulatory Ca(2+)-binding subunit (also known as calcineurin B). There are three catalytic subunits, each encoded by a separate gene (PPP3CA, PPP3CB, and PPP3CC) and two regulatory subunits which are also encoded by separate genes (PPP3R1 and PPP3R2). Interacts with SPATA33 (via PQIIIT motif). Testis specific.

It localises to the mitochondrion. Regulatory subunit of calcineurin, a calcium-dependent, calmodulin stimulated protein phosphatase. Confers calcium sensitivity. The polypeptide is Calcineurin subunit B type 2 (Ppp3r2) (Rattus norvegicus (Rat)).